The sequence spans 451 residues: UDP-N-acetylmuramate--L-alanine ligase (451 aa).

110-116 (GTHGKTT) contributes to the ATP binding site.

Belongs to the MurCDEF family.

The protein resides in the cytoplasm. The enzyme catalyses UDP-N-acetyl-alpha-D-muramate + L-alanine + ATP = UDP-N-acetyl-alpha-D-muramoyl-L-alanine + ADP + phosphate + H(+). The protein operates within cell wall biogenesis; peptidoglycan biosynthesis. Functionally, cell wall formation. This is UDP-N-acetylmuramate--L-alanine ligase from Francisella tularensis subsp. novicida (strain U112).